The sequence spans 564 residues: M protein, serotype 12 (564 aa).

The signal sequence occupies residues 1 to 41 (MAKNTTNRHYSLRKLKTGTASVAVALTVVGAGLVAGQTVRA). The stretch at 44-505 (SDLVAEKQRL…RAGKASDSQT (462 aa)) forms a coiled coil. 4 C repeats span residues 285 to 319 (KQLE…EAEL), 327 to 361 (AKVT…VEAA), 363 to 397 (KQLE…EKDL), and 405 to 439 (DKVK…EKAL). 2 disordered regions span residues 372–391 (SEAS…EAKK) and 404–438 (LDKV…VEKA). Basic and acidic residues-rich tracts occupy residues 404–413 (LDKVKEEKQI) and 421–438 (LRRD…VEKA). D repeat units lie at residues 472–477 (AKLEAE), 478–483 (AKALKE), 486–491 (AKQAEE), and 493–498 (AKLRAG). Positions 493–550 (AKLRAGKASDSQTPDAKPGNKAVPGKGQAPQAGTKPNQNKAPMKETKRQLPSTGETAN) are disordered. The LPXTG sorting signal motif lies at 542–546 (LPSTG). Thr-545 is modified (pentaglycyl murein peptidoglycan amidated threonine). Positions 546–564 (GETANPFFTAAALTVMAAA) are cleaved as a propeptide — removed by sortase.

It belongs to the M protein family.

It is found in the secreted. The protein resides in the cell wall. In terms of biological role, this protein is one of the different antigenic serotypes of protein M. Protein M is closely associated with virulence of the bacterium and can render the organism resistant to phagocytosis. The protein is M protein, serotype 12 (emm12) of Streptococcus pyogenes.